The primary structure comprises 623 residues: Pyranose 2-oxidase (623 aa).

The N-terminal stretch at 1–27 (MSTSSSDPFFNFTKSSFRSAAAQKASA) is a signal peptide. Residues 28-38 (TSLPPLPGPDK) constitute a propeptide that is removed on maturation. The residue at position 167 (His167) is a Tele-8alpha-FAD histidine. Substrate is bound by residues Gln448 and His450. His548 (proton acceptor) is an active-site residue. The active site involves Asn593.

This sequence belongs to the GMC oxidoreductase family. In terms of assembly, homotetramer. FAD serves as cofactor. Not glycosylated.

It is found in the periplasm. It carries out the reaction D-glucose + O2 = 2-dehydro-D-glucose + H2O2. Functionally, catalyzes the oxidation of various aldopyranoses and disaccharides on carbon-2 to the corresponding 2-keto sugars concomitant with the reduction of O(2) to H(2)O(2). Plays an important role in lignin degradation of wood rot fungi by supplying the essential cosubstrate H(2)O(2) for the ligninolytic peroxidases, lignin peroxidase and manganese-dependent peroxidase. The preferred substrate is D-glucose which is converted to 2-dehydro-D-glucose. Also acts on D-xylose, together with D-glucose the major sugars derived from wood, on L-sorbose, D-galactose and 1,5-anhydroglucitol, a diagnostic marker of diabetes mellitus. The sequence is that of Pyranose 2-oxidase (P2OX) from Trametes versicolor (White-rot fungus).